The sequence spans 243 residues: Ribosomal RNA small subunit methyltransferase G (243 aa).

Residues G82, F87, 133 to 134 (AE), and R152 contribute to the S-adenosyl-L-methionine site.

The protein belongs to the methyltransferase superfamily. RNA methyltransferase RsmG family.

Its subcellular location is the cytoplasm. Its function is as follows. Specifically methylates the N7 position of a guanine in 16S rRNA. In Clostridium novyi (strain NT), this protein is Ribosomal RNA small subunit methyltransferase G.